The sequence spans 101 residues: Ubiquitin-related modifier 1 homolog (101 aa).

At Gly-101 the chain carries 1-thioglycine. Residue Gly-101 forms a Glycyl lysine isopeptide (Gly-Lys) (interchain with K-? in acceptor proteins) linkage.

It belongs to the URM1 family. Interacts with cer. In terms of processing, C-terminal thiocarboxylation occurs in 2 steps, it is first acyl-adenylated (-COAMP) via the hesA/moeB/thiF part of the MOCS3 homolog, then thiocarboxylated (-COSH) via the rhodanese domain of the MOCS3 homolog.

The protein localises to the cytoplasm. It participates in tRNA modification; 5-methoxycarbonylmethyl-2-thiouridine-tRNA biosynthesis. Its function is as follows. Acts as a sulfur carrier required for 2-thiolation of mcm(5)S(2)U at tRNA wobble positions of cytosolic tRNA(Lys), tRNA(Glu) and tRNA(Gln). Serves as sulfur donor in tRNA 2-thiolation reaction by being thiocarboxylated (-COSH) at its C-terminus by MOCS3. The sulfur is then transferred to tRNA to form 2-thiolation of mcm(5)S(2)U. Also acts as a ubiquitin-like protein (UBL) that is covalently conjugated via an isopeptide bond to lysine residues of target proteins such as Prx2/Jafrac1, Ciao1, Eip71CD and GILT1. The thiocarboxylated form serves as substrate for conjugation and oxidative stress specifically induces the formation of UBL-protein conjugates. The sequence is that of Ubiquitin-related modifier 1 homolog from Drosophila simulans (Fruit fly).